The primary structure comprises 312 residues: Fasciclin-like arabinogalactan protein elcF (312 aa).

The N-terminal stretch at 1–16 (MKLFTLLLPALTSAHS) is a signal peptide. 2 FAS1 domains span residues 17-160 (LSTL…NASM) and 162-289 (LPHN…DKVL). N-linked (GlcNAc...) asparagine glycans are attached at residues Asn-48, Asn-68, Asn-113, Asn-157, and Asn-165.

It belongs to the fasciclin-like AGP family.

It functions in the pathway secondary metabolite biosynthesis. Its function is as follows. Fasciclin-like arabinogalactan protein; part of the gene cluster that mediates the biosynthesis of elsinochrome C, a perelyenequinone phytotoxin structurally similar to cercosporin. The first step of elsinochrome C biosynthesis is performed by the polyketide synthase elcA which catalyzes the formation of nor-toralactone. The starter unit acyltransferase (SAT) domain of elcA initiates polyketide extension by the selective utilization of acetyl-CoA, which is elongated to the heptaketide in the beta-ketoacyl synthase (KS) domain by successive condensations with six malonyl units introduced by the malonyl acyltransferase (MAT) domain. The product template (PT) domain catalyzes C4-C9 and C2-C11 aldol cyclizations and dehydrations to a trihydroxynaphthalene, which is thought to be delivered to the thioesterase (TE) domain for product release. The bifunctional enzyme elcB then methylates nor-toralactone to toralactone before conducting an unusual oxidative aromatic ring opening. The next step in perylenequinone biosynthesis is an O-methylation at the nascent OH-6 of the elcB product performed by the O-methyltransferase elcD. The oxidative coupling of the two monomeric naphthol units in perylenequinone biosynthesis is catalyzed by the FAD-dependent monooxygenase elcE and the multicopper oxidase elcG. ElcG might catalyze the first intermolecular coupling in a regio- and stereo-selective manner via a phenol radical coupling mechanism and the elcE could forge the second C-C bond intramolecularly via a hydride transfer mechanism. The fasciclin domain-containing protein elcF might also play a role duting this step. The last piece of the puzzle in the biosynthesis of elsinochrome C is the additional annulation by enolate coupling to afford the dihydrobenzo(ghi)perylenequinone system, catalyzed by the FAD-dependent monooxygenase elcH. The polypeptide is Fasciclin-like arabinogalactan protein elcF (Phaeosphaeria nodorum (strain SN15 / ATCC MYA-4574 / FGSC 10173) (Glume blotch fungus)).